The following is a 776-amino-acid chain: Protein translocase subunit SecA 2 (776 aa).

ATP contacts are provided by residues Q80, 98–102 (GEGKT), and D486.

This sequence belongs to the SecA family. As to quaternary structure, monomer and homodimer. Part of the essential Sec protein translocation apparatus which comprises SecA, SecYEG and auxiliary proteins SecDF. Other proteins may also be involved.

It localises to the cell membrane. The protein resides in the cytoplasm. It carries out the reaction ATP + H2O + cellular proteinSide 1 = ADP + phosphate + cellular proteinSide 2.. Part of the Sec protein translocase complex. Interacts with the SecYEG preprotein conducting channel. Has a central role in coupling the hydrolysis of ATP to the transfer of proteins into and across the cell membrane, serving as an ATP-driven molecular motor driving the stepwise translocation of polypeptide chains across the membrane. In Listeria welshimeri serovar 6b (strain ATCC 35897 / DSM 20650 / CCUG 15529 / CIP 8149 / NCTC 11857 / SLCC 5334 / V8), this protein is Protein translocase subunit SecA 2.